Reading from the N-terminus, the 298-residue chain is 4-diphosphocytidyl-2-C-methyl-D-erythritol kinase (298 aa).

Residue Lys-25 is part of the active site. Residue 109–119 coordinates ATP; it reads PVGGGFGGGSS. Asp-151 is a catalytic residue.

Belongs to the GHMP kinase family. IspE subfamily.

It carries out the reaction 4-CDP-2-C-methyl-D-erythritol + ATP = 4-CDP-2-C-methyl-D-erythritol 2-phosphate + ADP + H(+). It participates in isoprenoid biosynthesis; isopentenyl diphosphate biosynthesis via DXP pathway; isopentenyl diphosphate from 1-deoxy-D-xylulose 5-phosphate: step 3/6. Functionally, catalyzes the phosphorylation of the position 2 hydroxy group of 4-diphosphocytidyl-2C-methyl-D-erythritol. The chain is 4-diphosphocytidyl-2-C-methyl-D-erythritol kinase from Xylella fastidiosa (strain 9a5c).